The primary structure comprises 463 residues: Fumarate hydratase class II (463 aa).

Substrate contacts are provided by residues 97-99, arginine 125, 128-131, 138-140, and threonine 186; these read SGT, HPND, and SSN. The span at 121–134 shows a compositional bias: basic and acidic residues; sequence RGEGRKVHPNDHVN. A disordered region spans residues 121–142; it reads RGEGRKVHPNDHVNRGQSSNDT. The Proton donor/acceptor role is filled by histidine 187. Serine 317 is a catalytic residue. Residues serine 318 and 323-325 contribute to the substrate site; that span reads KVN.

This sequence belongs to the class-II fumarase/aspartase family. Fumarase subfamily. In terms of assembly, homotetramer.

It is found in the cytoplasm. The catalysed reaction is (S)-malate = fumarate + H2O. It functions in the pathway carbohydrate metabolism; tricarboxylic acid cycle; (S)-malate from fumarate: step 1/1. Its function is as follows. Involved in the TCA cycle. Catalyzes the stereospecific interconversion of fumarate to L-malate. The polypeptide is Fumarate hydratase class II (Bordetella bronchiseptica (strain ATCC BAA-588 / NCTC 13252 / RB50) (Alcaligenes bronchisepticus)).